The sequence spans 217 residues: uncharacterized protein (217 aa).

The segment covering 59-76 (AQSTIQRTSSLPVPSSSN) has biased composition (polar residues). Disordered stretches follow at residues 59 to 105 (AQST…ETAN) and 124 to 217 (KKSL…HISK). Ser-68 bears the Phosphoserine mark. Residue Thr-92 is modified to Phosphothreonine. The segment covering 124-135 (KKSLERRVREEQ) has biased composition (basic and acidic residues). Residues 136–147 (EEKTDNEDDNDV) are compositionally biased toward acidic residues. Polar residues predominate over residues 148–157 (EISTQESLEN). The span at 173-188 (LEDDIEGQEFSFDDQD) shows a compositional bias: acidic residues. The segment covering 199-217 (WLSSQKQQGSPLTSDHISK) has biased composition (polar residues).

This is an uncharacterized protein from Schizosaccharomyces pombe (strain 972 / ATCC 24843) (Fission yeast).